A 332-amino-acid polypeptide reads, in one-letter code: N-arachidonyl glycine receptor (332 aa).

The Extracellular segment spans residues 1–26; the sequence is MTTPHSQAQPGLPIDPHPDEYKVAAL. Residues 27-47 form a helical membrane-spanning segment; that stretch reads VFYSCIFIIGLFVNVTALWVF. The Cytoplasmic segment spans residues 48-56; it reads SCTTKKRTT. A helical transmembrane segment spans residues 57-77; the sequence is VTVYMMNVALLDLVFIMSLPF. Residues 78 to 95 are Extracellular-facing; that stretch reads RMLYYAKGEWPFGEYFCR. Cys94 and Cys173 are joined by a disulfide. A helical membrane pass occupies residues 96 to 116; that stretch reads ILGALTVFYPSIALWLLAFIS. Topologically, residues 117 to 138 are cytoplasmic; the sequence is ADRYMAIVQPKYAKELKNTCKA. The chain crosses the membrane as a helical span at residues 139–159; it reads VMACVGVWIMTLTTTIPLLLL. Residues 160-192 lie on the Extracellular side of the membrane; it reads YEDPDTASSTPPTCLKISDIIYLKAINALNFTR. The N-linked (GlcNAc...) asparagine glycan is linked to Asn189. Residues 193 to 213 form a helical membrane-spanning segment; that stretch reads LIFFFLIPLFIMIGCYLVIIH. The Cytoplasmic portion of the chain corresponds to 214 to 233; the sequence is SLLHGKTSKLKPKVKEKSIR. Residues 234–254 form a helical membrane-spanning segment; the sequence is IIITLMVQVLVCFMPFHICFA. The Extracellular portion of the chain corresponds to 255–269; it reads FLMLGGDENSYNPWG. A helical membrane pass occupies residues 270–290; sequence AFTTFLMNLSTCLDVILYYIV. Over 291–332 the chain is Cytoplasmic; that stretch reads SKQFQARVISVMLYRNYLRSVRRKSFRSGSLRSLSNINSEML. Ser323 is modified (phosphoserine).

Belongs to the G-protein coupled receptor 1 family.

It localises to the cell membrane. It is found in the cytoplasmic vesicle membrane. In terms of biological role, g protein-coupled receptor (GPCR) that plays a role in diverse physiological processes particularly within the immune and nervous systems. Becomes active when triggered by various endogenous ligands including endocannabinoid N-arachidonyl glycine (NAGly), delta-9-tetrahydrocannabinol or resolvin D2/RvD2 derived from the omega-3 fatty acid docosahexaenoic acid (DHA). Upon RvD2 binding, facilitates the resolution of inflammation, aiding in tissue repair and homeostasis. Mechanistically, RvD2 ligation initiates Galphas protein coupling, activation of cAMP-PKA signaling pathway and phosphorylation of STAT3, leading to RvD2-stimulated macrophage phagocytosis. Mediates NAGly-induced process of reorganization of actin filaments and induction of acrosomal exocytosis. Activation by N-arachidonoyl glycine (NAGly) can also induce apoptosis in macrophages. Plays a role in homeostasis of CD8+ subsets of intraepithelial lymphocytes (IELs) (CD8alphaalpha and CD8alphabeta IELs) in small intestine by supporting preferential migration of CD8alphaalpha T-cells to intraepithelial compartment over lamina propria compartment, and by mediating their reconstitution into small intestine after bone marrow transplant. Participates also in hypotensive responses, mediating reduction in intraocular and blood pressure. This Bos taurus (Bovine) protein is N-arachidonyl glycine receptor (GPR18).